Reading from the N-terminus, the 245-residue chain is E3 ubiquitin-protein ligase RNF138 (245 aa).

The segment at 18-58 (CPVCQEVLKTPVRTAACQHVFCRKCFLTAMRESGIHCPLCR) adopts an RING-type zinc-finger fold. Positions 86, 89, 101, and 105 each coordinate Zn(2+). The C2HC RNF-type zinc finger occupies 86–105 (CRCCSKKIKFYRMRHHYKSC). Residues 128 to 154 (VRSSNRSETSASDNTETYQEDTSSSGH) form a disordered region. Threonine 142 carries the phosphothreonine modification. 2 C2H2-type zinc fingers span residues 157 to 180 (FKCPLCQESNFTRQRLLDHCNSNH) and 187 to 215 (VTCPICVSLPWGDPSQITRNFVSHLNQRH). The UIM domain maps to 225–243 (LQLDEETQYQTAVEESFQV).

In terms of assembly, interacts with NLK. Interacts with XRCC5/Ku80. Interacts with RBBP8/CtIP. Post-translationally, auto-ubiquitinated.

It is found in the chromosome. It catalyses the reaction S-ubiquitinyl-[E2 ubiquitin-conjugating enzyme]-L-cysteine + [acceptor protein]-L-lysine = [E2 ubiquitin-conjugating enzyme]-L-cysteine + N(6)-ubiquitinyl-[acceptor protein]-L-lysine.. It participates in protein modification; protein ubiquitination. E3 ubiquitin-protein ligase involved in DNA damage response by promoting DNA resection and homologous recombination. Recruited to sites of double-strand breaks following DNA damage and specifically promotes double-strand break repair via homologous recombination. Two different, non-exclusive, mechanisms have been proposed. According to a report, regulates the choice of double-strand break repair by favoring homologous recombination over non-homologous end joining (NHEJ): acts by mediating ubiquitination of XRCC5/Ku80, leading to remove the Ku complex from DNA breaks, thereby promoting homologous recombination. According to another report, cooperates with UBE2Ds E2 ubiquitin ligases (UBE2D1, UBE2D2, UBE2D3 or UBE2D4) to promote homologous recombination by mediating ubiquitination of RBBP8/CtIP. Together with NLK, involved in the ubiquitination and degradation of TCF/LEF. Also exhibits auto-ubiquitination activity in combination with UBE2K. May act as a negative regulator in the Wnt/beta-catenin-mediated signaling pathway. The polypeptide is E3 ubiquitin-protein ligase RNF138 (Mus musculus (Mouse)).